Consider the following 370-residue polypeptide: 3-dehydroquinate synthase (370 aa).

Residues 107 to 111, 131 to 132, K144, and K153 contribute to the NAD(+) site; these read GVIGD and TS. Zn(2+) is bound by residues E186, H249, and H267.

Belongs to the sugar phosphate cyclases superfamily. Dehydroquinate synthase family. Co(2+) is required as a cofactor. Requires Zn(2+) as cofactor. NAD(+) serves as cofactor.

Its subcellular location is the cytoplasm. It carries out the reaction 7-phospho-2-dehydro-3-deoxy-D-arabino-heptonate = 3-dehydroquinate + phosphate. Its pathway is metabolic intermediate biosynthesis; chorismate biosynthesis; chorismate from D-erythrose 4-phosphate and phosphoenolpyruvate: step 2/7. Its function is as follows. Catalyzes the conversion of 3-deoxy-D-arabino-heptulosonate 7-phosphate (DAHP) to dehydroquinate (DHQ). The sequence is that of 3-dehydroquinate synthase from Ruegeria pomeroyi (strain ATCC 700808 / DSM 15171 / DSS-3) (Silicibacter pomeroyi).